The sequence spans 142 residues: Hemoglobin subunit alpha (142 aa).

The Globin domain maps to 2-142 (VLSSADKNNV…VSTVLTSKYR (141 aa)). Phosphoserine is present on Ser4. N6-succinyllysine occurs at positions 8 and 12. N6-acetyllysine; alternate is present on Lys17. At Lys17 the chain carries N6-succinyllysine; alternate. Residue Tyr25 is modified to Phosphotyrosine. Ser36 bears the Phosphoserine mark. Lys41 is subject to N6-succinyllysine. At Ser50 the chain carries Phosphoserine. An O2-binding site is contributed by His59. His88 contributes to the heme b binding site. Position 103 is a phosphoserine (Ser103). Position 109 is a phosphothreonine (Thr109). Phosphoserine is present on Ser125. Phosphothreonine is present on residues Thr135 and Thr138. Ser139 carries the phosphoserine modification.

This sequence belongs to the globin family. In terms of assembly, heterotetramer of two alpha chains and two beta chains. In terms of tissue distribution, red blood cells.

In terms of biological role, involved in oxygen transport from the lung to the various peripheral tissues. Its function is as follows. Hemopressin acts as an antagonist peptide of the cannabinoid receptor CNR1. Hemopressin-binding efficiently blocks cannabinoid receptor CNR1 and subsequent signaling. The polypeptide is Hemoglobin subunit alpha (HBA) (Panthera leo (Lion)).